The primary structure comprises 271 residues: Tryptophan synthase alpha chain (271 aa).

Residues Glu-49 and Asp-60 each act as proton acceptor in the active site.

This sequence belongs to the TrpA family. Tetramer of two alpha and two beta chains.

It catalyses the reaction (1S,2R)-1-C-(indol-3-yl)glycerol 3-phosphate + L-serine = D-glyceraldehyde 3-phosphate + L-tryptophan + H2O. It functions in the pathway amino-acid biosynthesis; L-tryptophan biosynthesis; L-tryptophan from chorismate: step 5/5. Its function is as follows. The alpha subunit is responsible for the aldol cleavage of indoleglycerol phosphate to indole and glyceraldehyde 3-phosphate. In Burkholderia pseudomallei (strain 1106a), this protein is Tryptophan synthase alpha chain.